We begin with the raw amino-acid sequence, 250 residues long: 5'/3'-nucleotidase SurE (250 aa).

4 residues coordinate a divalent metal cation: aspartate 9, aspartate 10, serine 40, and asparagine 93.

This sequence belongs to the SurE nucleotidase family. The cofactor is a divalent metal cation.

Its subcellular location is the cytoplasm. It catalyses the reaction a ribonucleoside 5'-phosphate + H2O = a ribonucleoside + phosphate. The catalysed reaction is a ribonucleoside 3'-phosphate + H2O = a ribonucleoside + phosphate. The enzyme catalyses [phosphate](n) + H2O = [phosphate](n-1) + phosphate + H(+). Nucleotidase with a broad substrate specificity as it can dephosphorylate various ribo- and deoxyribonucleoside 5'-monophosphates and ribonucleoside 3'-monophosphates with highest affinity to 3'-AMP. Also hydrolyzes polyphosphate (exopolyphosphatase activity) with the preference for short-chain-length substrates (P20-25). Might be involved in the regulation of dNTP and NTP pools, and in the turnover of 3'-mononucleotides produced by numerous intracellular RNases (T1, T2, and F) during the degradation of various RNAs. The polypeptide is 5'/3'-nucleotidase SurE (Yersinia enterocolitica serotype O:8 / biotype 1B (strain NCTC 13174 / 8081)).